A 698-amino-acid chain; its full sequence is Probable threonine--tRNA ligase 2, cytoplasmic (698 aa).

In terms of domain architecture, TGS spans 38–100; sequence GGGNIKLNDG…EMSGKDYNIE (63 aa). The segment at 541-560 is disordered; it reads NNNNNNNNNNEEINDNNNNN.

The protein belongs to the class-II aminoacyl-tRNA synthetase family.

The protein localises to the cytoplasm. It carries out the reaction tRNA(Thr) + L-threonine + ATP = L-threonyl-tRNA(Thr) + AMP + diphosphate + H(+). The chain is Probable threonine--tRNA ligase 2, cytoplasmic (thrS2) from Dictyostelium discoideum (Social amoeba).